The primary structure comprises 142 residues: Biogenesis of lysosome-related organelles complex 1 subunit 2 (142 aa).

The tract at residues 1–33 (MAAAAEGVLATRSDEPARDDAAVETAEEAKEPA) is disordered. Residue A2 is modified to N-acetylalanine. The span at 12 to 33 (RSDEPARDDAAVETAEEAKEPA) shows a compositional bias: basic and acidic residues. Positions 79 to 127 (EMKDIAINISRNLKDLNQKYAGLQPYLDQINVIEEQVAALEQAAYKLDA) form a coiled coil.

Belongs to the BLOC1S2 family. As to quaternary structure, component of the biogenesis of lysosome-related organelles complex 1 (BLOC-1) composed of BLOC1S1, BLOC1S2, BLOC1S3, BLOC1S4, BLOC1S5, BLOC1S6, DTNBP1/BLOC1S7 and SNAPIN/BLOC1S8. Octamer composed of one copy each BLOC1S1, BLOC1S2, BLOC1S3, BLOC1S4, BLOC1S5, BLOC1S6, DTNBP1/BLOC1S7 and SNAPIN/BLOC1S8. Interacts directly with BLOC1S1, BLOC1S3, BLOC1S4, BLOC1S5 and SNAPIN. The BLOC-1 complex associates with the AP-3 protein complex and membrane protein cargos. Component of the BLOC-one-related complex (BORC) which is composed of BLOC1S1, BLOC1S2, BORCS5, BORCS6, BORCS7, BORCS8, KXD1 and SNAPIN. Interacts with gamma-tubulin. Interacts with IFT57. In terms of tissue distribution, isoform 1 and isoform 2 are widely expressed. Expressed in various malignant tumor tissues (at protein level).

The protein localises to the cytoplasm. The protein resides in the cytoskeleton. Its subcellular location is the microtubule organizing center. It is found in the centrosome. It localises to the lysosome membrane. Component of the BLOC-1 complex, a complex that is required for normal biogenesis of lysosome-related organelles (LRO), such as platelet dense granules and melanosomes. In concert with the AP-3 complex, the BLOC-1 complex is required to target membrane protein cargos into vesicles assembled at cell bodies for delivery into neurites and nerve terminals. The BLOC-1 complex, in association with SNARE proteins, is also proposed to be involved in neurite extension. As part of the BORC complex may play a role in lysosomes movement and localization at the cell periphery. Associated with the cytosolic face of lysosomes, the BORC complex may recruit ARL8B and couple lysosomes to microtubule plus-end-directed kinesin motor. May play a role in cell proliferation. In Homo sapiens (Human), this protein is Biogenesis of lysosome-related organelles complex 1 subunit 2 (BLOC1S2).